Consider the following 648-residue polypeptide: DNA gyrase subunit B (648 aa).

Residues R432 to P546 form the Toprim domain. Residues E438, D511, and D513 each contribute to the Mg(2+) site.

This sequence belongs to the type II topoisomerase GyrB family. In terms of assembly, heterotetramer, composed of two GyrA and two GyrB chains. In the heterotetramer, GyrA contains the active site tyrosine that forms a transient covalent intermediate with DNA, while GyrB binds cofactors and catalyzes ATP hydrolysis. Mg(2+) serves as cofactor. It depends on Mn(2+) as a cofactor. Requires Ca(2+) as cofactor.

The protein resides in the cytoplasm. It carries out the reaction ATP-dependent breakage, passage and rejoining of double-stranded DNA.. Functionally, a type II topoisomerase that negatively supercoils closed circular double-stranded (ds) DNA in an ATP-dependent manner to modulate DNA topology and maintain chromosomes in an underwound state. Negative supercoiling favors strand separation, and DNA replication, transcription, recombination and repair, all of which involve strand separation. Also able to catalyze the interconversion of other topological isomers of dsDNA rings, including catenanes and knotted rings. Type II topoisomerases break and join 2 DNA strands simultaneously in an ATP-dependent manner. In Metamycoplasma hominis (strain ATCC 23114 / DSM 25592 / NBRC 14850 / NCTC 10111 / PG21) (Mycoplasma hominis), this protein is DNA gyrase subunit B.